A 225-amino-acid polypeptide reads, in one-letter code: NAD(P)H-quinone oxidoreductase subunit K, chloroplastic (225 aa).

Residues Cys43, Cys44, Cys108, and Cys139 each contribute to the [4Fe-4S] cluster site.

Belongs to the complex I 20 kDa subunit family. In terms of assembly, NDH is composed of at least 16 different subunits, 5 of which are encoded in the nucleus. [4Fe-4S] cluster is required as a cofactor.

The protein localises to the plastid. The protein resides in the chloroplast thylakoid membrane. It carries out the reaction a plastoquinone + NADH + (n+1) H(+)(in) = a plastoquinol + NAD(+) + n H(+)(out). It catalyses the reaction a plastoquinone + NADPH + (n+1) H(+)(in) = a plastoquinol + NADP(+) + n H(+)(out). Its function is as follows. NDH shuttles electrons from NAD(P)H:plastoquinone, via FMN and iron-sulfur (Fe-S) centers, to quinones in the photosynthetic chain and possibly in a chloroplast respiratory chain. The immediate electron acceptor for the enzyme in this species is believed to be plastoquinone. Couples the redox reaction to proton translocation, and thus conserves the redox energy in a proton gradient. In Lobularia maritima (Sweet alyssum), this protein is NAD(P)H-quinone oxidoreductase subunit K, chloroplastic.